The following is a 435-amino-acid chain: Adenylosuccinate synthetase (435 aa).

GTP-binding positions include 12-18 (GDEGKGK) and 40-42 (GHT). D13 functions as the Proton acceptor in the catalytic mechanism. Mg(2+)-binding residues include D13 and G40. Residues 13 to 16 (DEGK), 38 to 41 (NAGH), T130, R144, Q224, T239, and R301 contribute to the IMP site. The Proton donor role is filled by H41. 297–303 (TVSNRKR) provides a ligand contact to substrate. Residues R303, 329–331 (KLD), and 411–413 (SAG) contribute to the GTP site.

Belongs to the adenylosuccinate synthetase family. As to quaternary structure, homodimer. Requires Mg(2+) as cofactor.

The protein resides in the cytoplasm. The catalysed reaction is IMP + L-aspartate + GTP = N(6)-(1,2-dicarboxyethyl)-AMP + GDP + phosphate + 2 H(+). It functions in the pathway purine metabolism; AMP biosynthesis via de novo pathway; AMP from IMP: step 1/2. In terms of biological role, plays an important role in the de novo pathway of purine nucleotide biosynthesis. Catalyzes the first committed step in the biosynthesis of AMP from IMP. This Wolbachia sp. subsp. Brugia malayi (strain TRS) protein is Adenylosuccinate synthetase.